The sequence spans 255 residues: uncharacterized protein (255 aa).

It belongs to the methyltransferase superfamily.

This is an uncharacterized protein from Mycolicibacterium paratuberculosis (strain ATCC BAA-968 / K-10) (Mycobacterium paratuberculosis).